The sequence spans 241 residues: Co-chaperone protein p23-1 (241 aa).

A CS domain is found at 2–91 (SRHPEVKWAE…AEPERWNKLL (90 aa)). 17 MGG repeats span residues 129-131 (MGG), 132-134 (MGG), 135-137 (MGG), 138-140 (MGG), 141-143 (MGG), 144-146 (MGG), 147-149 (MGG), 150-152 (MGG), 162-164 (MGG), 165-167 (MGG), 168-170 (MGG), 171-173 (MGG), 180-182 (MGG), 183-185 (MGG), 186-188 (MGG), 189-191 (MGG), and 192-194 (MGG). Positions 129–194 (MGGMGGMGGM…GMGGMGGMGG (66 aa)) are 17 X 3 AA repeats of M-G-G. Residues 188–241 (GMGGMGGMEEFEDSDDEEETAKSGDKKDDAVKEEGLATEKAPAAEETTSVKEDK) form a disordered region. Residues 196-206 (EEFEDSDDEEE) are compositionally biased toward acidic residues. The span at 207 to 224 (TAKSGDKKDDAVKEEGLA) shows a compositional bias: basic and acidic residues. The segment covering 225 to 234 (TEKAPAAEET) has biased composition (low complexity).

This sequence belongs to the p23/wos2 family. In terms of assembly, interacts with HSP90 in an ATP-dependent manner. Interacts with HSP90-5, HSP90-6 and HSP90-7. Widely expressed but preferentially in the root meristem.

The protein resides in the cytoplasm. The protein localises to the nucleus. Its function is as follows. Acts as a co-chaperone for HSP90. Controls root development through the modulation of auxin distribution in the root meristem. This Arabidopsis thaliana (Mouse-ear cress) protein is Co-chaperone protein p23-1.